We begin with the raw amino-acid sequence, 382 residues long: Succinyl-diaminopimelate desuccinylase (382 aa).

H73 serves as a coordination point for Zn(2+). D75 is an active-site residue. D106 contributes to the Zn(2+) binding site. E140 serves as the catalytic Proton acceptor. Residues E141, E169, and H355 each coordinate Zn(2+).

Belongs to the peptidase M20A family. DapE subfamily. As to quaternary structure, homodimer. The cofactor is Zn(2+). It depends on Co(2+) as a cofactor.

The catalysed reaction is N-succinyl-(2S,6S)-2,6-diaminopimelate + H2O = (2S,6S)-2,6-diaminopimelate + succinate. It participates in amino-acid biosynthesis; L-lysine biosynthesis via DAP pathway; LL-2,6-diaminopimelate from (S)-tetrahydrodipicolinate (succinylase route): step 3/3. Its function is as follows. Catalyzes the hydrolysis of N-succinyl-L,L-diaminopimelic acid (SDAP), forming succinate and LL-2,6-diaminopimelate (DAP), an intermediate involved in the bacterial biosynthesis of lysine and meso-diaminopimelic acid, an essential component of bacterial cell walls. The sequence is that of Succinyl-diaminopimelate desuccinylase from Cellvibrio japonicus (strain Ueda107) (Pseudomonas fluorescens subsp. cellulosa).